Here is a 386-residue protein sequence, read N- to C-terminus: Probable serine/threonine-protein kinase PBL23 (386 aa).

C5 carries the S-palmitoyl cysteine lipid modification. The Protein kinase domain occupies 82-360; sequence FNPDNQLGEG…SDVVTALEYL (279 aa). ATP is bound by residues 88–96 and K111; that span reads LGEGGFGRV. D210 (proton acceptor) is an active-site residue. The disordered stretch occupies residues 365 to 386; sequence TEEDGQTVEGEEEEEEDERSKL. Over residues 368–386 the composition is skewed to acidic residues; that stretch reads DGQTVEGEEEEEEDERSKL.

This sequence belongs to the protein kinase superfamily. Ser/Thr protein kinase family.

The protein resides in the cell membrane. The enzyme catalyses L-seryl-[protein] + ATP = O-phospho-L-seryl-[protein] + ADP + H(+). It carries out the reaction L-threonyl-[protein] + ATP = O-phospho-L-threonyl-[protein] + ADP + H(+). In terms of biological role, may be involved in plant defense signaling. The polypeptide is Probable serine/threonine-protein kinase PBL23 (Arabidopsis thaliana (Mouse-ear cress)).